Consider the following 332-residue polypeptide: Glyceraldehyde-3-phosphate dehydrogenase (332 aa).

NAD(+)-binding positions include 10 to 11, aspartate 36, lysine 81, and serine 116; that span reads RI. Residues 150 to 152, threonine 181, arginine 197, 210 to 211, and arginine 233 each bind D-glyceraldehyde 3-phosphate; these read SCT and TK. The active-site Nucleophile is cysteine 151. Asparagine 314 provides a ligand contact to NAD(+).

This sequence belongs to the glyceraldehyde-3-phosphate dehydrogenase family. In terms of assembly, homotetramer.

It is found in the cytoplasm. The catalysed reaction is D-glyceraldehyde 3-phosphate + phosphate + NAD(+) = (2R)-3-phospho-glyceroyl phosphate + NADH + H(+). It functions in the pathway carbohydrate degradation; glycolysis; pyruvate from D-glyceraldehyde 3-phosphate: step 1/5. Catalyzes the oxidative phosphorylation of glyceraldehyde 3-phosphate (G3P) to 1,3-bisphosphoglycerate (BPG) using the cofactor NAD. The first reaction step involves the formation of a hemiacetal intermediate between G3P and a cysteine residue, and this hemiacetal intermediate is then oxidized to a thioester, with concomitant reduction of NAD to NADH. The reduced NADH is then exchanged with the second NAD, and the thioester is attacked by a nucleophilic inorganic phosphate to produce BPG. The protein is Glyceraldehyde-3-phosphate dehydrogenase (gapA) of Helicobacter pylori (strain J99 / ATCC 700824) (Campylobacter pylori J99).